Here is a 53-residue protein sequence, read N- to C-terminus: MEEFKMTVWTNGKAIRKYTGQDKHPDTNPSKRMEWFKATAIIKPDTGDNNERD.

As to quaternary structure, homodimer.

Its function is as follows. Counteracts the host Hachiman antiviral defense system. This Bacillus phage SBSphiJ4 protein is Hachiman anti-defense 1.